An 831-amino-acid chain; its full sequence is Translation initiation factor IF-2 (831 aa).

Residues 116 to 157 are disordered; it reads IEPLETDKEVEQKQQNTEENKVEVSAKIVQDDEDIPSQIPKK. Residues 117 to 139 are compositionally biased toward basic and acidic residues; it reads EPLETDKEVEQKQQNTEENKVEV. The tr-type G domain maps to 329–499; that stretch reads TRAPVVTVMG…LLIAEMQDLK (171 aa). The tract at residues 338 to 345 is G1; that stretch reads GHVDHGKT. 338 to 345 is a binding site for GTP; the sequence is GHVDHGKT. The G2 stretch occupies residues 363-367; it reads GITQH. Residues 385–388 form a G3 region; it reads DTPG. GTP is bound by residues 385–389 and 439–442; these read DTPGH and NKID. A G4 region spans residues 439–442; the sequence is NKID. The tract at residues 475 to 477 is G5; that stretch reads SAL.

Belongs to the TRAFAC class translation factor GTPase superfamily. Classic translation factor GTPase family. IF-2 subfamily.

The protein localises to the cytoplasm. One of the essential components for the initiation of protein synthesis. Protects formylmethionyl-tRNA from spontaneous hydrolysis and promotes its binding to the 30S ribosomal subunits. Also involved in the hydrolysis of GTP during the formation of the 70S ribosomal complex. This chain is Translation initiation factor IF-2, found in Rickettsia conorii (strain ATCC VR-613 / Malish 7).